The primary structure comprises 217 residues: Insulin-like growth factor 2.L (217 aa).

Positions Met1–Ala56 are cleaved as a signal peptide. A b region spans residues Tyr57–Phe83. 3 disulfide bridges follow: Cys64–Cys103, Cys76–Cys116, and Cys102–Cys107. The c stretch occupies residues Ser84 to Arg96. The a stretch occupies residues Gly97 to Ala117. Positions Lys118–Glu123 are d. Residues Arg124–Asn217 constitute a propeptide, e peptide.

The protein belongs to the insulin family.

It is found in the secreted. In terms of biological role, the insulin-like growth factors, isolated from plasma, are structurally and functionally related to insulin but have a much higher growth-promoting activity. Promotes anterior neural development. Acts as a ligand for integrin which is required for IGF2 signaling. This is Insulin-like growth factor 2.L from Xenopus laevis (African clawed frog).